The primary structure comprises 173 residues: Adenine phosphoribosyltransferase (173 aa).

It belongs to the purine/pyrimidine phosphoribosyltransferase family. In terms of assembly, homodimer.

Its subcellular location is the cytoplasm. It carries out the reaction AMP + diphosphate = 5-phospho-alpha-D-ribose 1-diphosphate + adenine. Its pathway is purine metabolism; AMP biosynthesis via salvage pathway; AMP from adenine: step 1/1. In terms of biological role, catalyzes a salvage reaction resulting in the formation of AMP, that is energically less costly than de novo synthesis. This Listeria monocytogenes serotype 4b (strain CLIP80459) protein is Adenine phosphoribosyltransferase.